The chain runs to 260 residues: Neuraminyllactose-binding hemagglutinin (260 aa).

The signal sequence occupies residues 1 to 27 (MKTNGHFKDFAWKKCLLGASVGALLVG). Cys28 carries N-palmitoyl cysteine lipidation. Residue Cys28 is the site of S-diacylglycerol cysteine attachment. An N-acetyl-neuraminyl-alpha(2,3)-lactose binding motif region spans residues 134–139 (KRTIQK).

The protein localises to the cell outer membrane. This is Neuraminyllactose-binding hemagglutinin (hpaA) from Helicobacter pylori (Campylobacter pylori).